The chain runs to 368 residues: (3S,6E)-nerolidol synthase (368 aa).

Residues aspartate 91, asparagine 228, and serine 232 each coordinate Mg(2+). Positions 91–95 (DDLLE) match the DDXXE motif motif.

The protein belongs to the terpene synthase family. It depends on Mg(2+) as a cofactor. The cofactor is Mn(2+).

It catalyses the reaction (2E,6E)-farnesyl diphosphate + H2O = (3S,6E)-nerolidol + diphosphate. It carries out the reaction (2E)-geranyl diphosphate + H2O = (S)-linalool + diphosphate. It participates in secondary metabolite biosynthesis; terpenoid biosynthesis. Functionally, sesquiterpene synthase converting farnesyl diphosphate to nerolidol. Also has a monoterpene synthase activity, converting geranyl diphosphate into linalool as the major product. Has no diterpene synthase activity. This is (3S,6E)-nerolidol synthase from Selaginella moellendorffii (Spikemoss).